The following is a 517-amino-acid chain: Succinyl-CoA:3-ketoacid coenzyme A transferase 2, mitochondrial (517 aa).

The N-terminal 39 residues, 1–39 (MAALRLLASVLGRGVPAGGSGLALSQGCARCFATSPRLR), are a transit peptide targeting the mitochondrion. Glutamate 341 functions as the 5-glutamyl coenzyme A thioester intermediate in the catalytic mechanism.

Belongs to the 3-oxoacid CoA-transferase family. As to quaternary structure, homodimer. Testis specific.

It is found in the mitochondrion. The catalysed reaction is a 3-oxo acid + succinyl-CoA = a 3-oxoacyl-CoA + succinate. It participates in ketone metabolism; succinyl-CoA degradation; acetoacetyl-CoA from succinyl-CoA: step 1/1. In terms of biological role, key enzyme for ketone body catabolism. Transfers the CoA moiety from succinate to acetoacetate. Formation of the enzyme-CoA intermediate proceeds via an unstable anhydride species formed between the carboxylate groups of the enzyme and substrate. The protein is Succinyl-CoA:3-ketoacid coenzyme A transferase 2, mitochondrial (OXCT2) of Homo sapiens (Human).